The chain runs to 73 residues: Nodulin-1 (73 aa).

Positions 1–23 (MERKTLASLCFFLIVLLAAQVVA) are cleaved as a signal peptide. Cystine bridges form between Cys-39-Cys-64, Cys-49-Cys-71, and Cys-53-Cys-73.

In terms of tissue distribution, expressed in nodules, but not in leaves, stems, flowers and roots. In developing nodules, expressed close to the infection threads.

The protein resides in the secreted. Nodulation-related protein probably involved in the infection process. This chain is Nodulin-1 (N1), found in Medicago truncatula (Barrel medic).